The following is a 1448-amino-acid chain: Sister chromatid cohesion protein PDS5 homolog B-A (1448 aa).

An HEAT repeat occupies 383-419 (LLVNDQLLNFVRERTLDKRWRVRKEAMMGLAQIYKKY). The segment covering 1141-1155 (AGKQMLSKSSRMETV) has biased composition (polar residues). The disordered stretch occupies residues 1141–1448 (AGKQMLSKSS…TGRLRSAKKR (308 aa)). A compositionally biased stretch (low complexity) spans 1156-1168 (SNASSGSNPSSPG). Residues 1177-1186 (MELDQSENED) are compositionally biased toward acidic residues. 3 stretches are compositionally biased toward basic and acidic residues: residues 1196-1214 (KKSDKRDDSDLLKSELEKP), 1233-1243 (ELSKPAQEPKS), and 1264-1273 (WQEKRLKEDL). Residues 1285-1294 (KKGRRGRPPK) are compositionally biased toward basic residues. The segment at residues 1286–1298 (KGRRGRPPKSAKM) is a DNA-binding region (a.T hook 1). Acidic residues predominate over residues 1324–1341 (PTDEDDHLEISEEQDFEN). A compositionally biased stretch (basic residues) spans 1346 to 1356 (RKGRGSSRRTP). 2 DNA-binding regions (a.T hook) span residues 1374-1386 (QKRRGRPPKTPTV) and 1390-1402 (KSHVGRPRKVVSK). Residues 1389-1399 (KKSHVGRPRKV) are compositionally biased toward basic residues.

It belongs to the PDS5 family. Interacts with the cohesin complex. Post-translationally, phosphorylated in mitotic cells.

Its subcellular location is the nucleus. Its function is as follows. Plays a role in androgen-induced proliferative arrest. Required for maintenance of sister chromatid cohesion during mitosis. This is Sister chromatid cohesion protein PDS5 homolog B-A (pds5b-a) from Xenopus laevis (African clawed frog).